Consider the following 404-residue polypeptide: Tryptophan synthase beta chain (404 aa).

K90 carries the N6-(pyridoxal phosphate)lysine modification.

This sequence belongs to the TrpB family. Tetramer of two alpha and two beta chains. The cofactor is pyridoxal 5'-phosphate.

The catalysed reaction is (1S,2R)-1-C-(indol-3-yl)glycerol 3-phosphate + L-serine = D-glyceraldehyde 3-phosphate + L-tryptophan + H2O. Its pathway is amino-acid biosynthesis; L-tryptophan biosynthesis; L-tryptophan from chorismate: step 5/5. In terms of biological role, the beta subunit is responsible for the synthesis of L-tryptophan from indole and L-serine. This is Tryptophan synthase beta chain from Geobacillus thermodenitrificans (strain NG80-2).